A 1062-amino-acid chain; its full sequence is Carbamoyl phosphate synthase large chain (1062 aa).

Residues 1–401 (MPKRKDIHKI…AMQKAVRSLE (401 aa)) form a carboxyphosphate synthetic domain region. ATP-binding residues include R129, R169, G175, G176, K208, I210, E215, G241, I242, H243, Q284, and E298. Residues 133–327 (KNLCKELGEP…IAKMAAKIAV (195 aa)) enclose the ATP-grasp 1 domain. Residues Q284, E298, and N300 each coordinate Mg(2+). Mn(2+) contacts are provided by Q284, E298, and N300. The oligomerization domain stretch occupies residues 402–546 (IDEKDLYSEE…YSTYDAENES (145 aa)). The tract at residues 547-929 (HRSGKKSVIV…ALYKAFAGAK (383 aa)) is carbamoyl phosphate synthetic domain. Residues 671–861 (DDIIKELKLN…MAQVATRVIM (191 aa)) form the ATP-grasp 2 domain. Residues R707, D746, L748, E752, G777, V778, H779, S780, Q820, and E832 each contribute to the ATP site. Mg(2+) is bound by residues Q820, E832, and N834. Mn(2+)-binding residues include Q820, E832, and N834. One can recognise an MGS-like domain in the interval 930 to 1062 (MQLPENGNVL…NRSFATDALQ (133 aa)). The allosteric domain stretch occupies residues 930 to 1062 (MQLPENGNVL…NRSFATDALQ (133 aa)).

The protein belongs to the CarB family. In terms of assembly, composed of two chains; the small (or glutamine) chain promotes the hydrolysis of glutamine to ammonia, which is used by the large (or ammonia) chain to synthesize carbamoyl phosphate. Tetramer of heterodimers (alpha,beta)4. Mg(2+) serves as cofactor. Requires Mn(2+) as cofactor.

The enzyme catalyses hydrogencarbonate + L-glutamine + 2 ATP + H2O = carbamoyl phosphate + L-glutamate + 2 ADP + phosphate + 2 H(+). The catalysed reaction is hydrogencarbonate + NH4(+) + 2 ATP = carbamoyl phosphate + 2 ADP + phosphate + 2 H(+). It participates in amino-acid biosynthesis; L-arginine biosynthesis; carbamoyl phosphate from bicarbonate: step 1/1. Its pathway is pyrimidine metabolism; UMP biosynthesis via de novo pathway; (S)-dihydroorotate from bicarbonate: step 1/3. In terms of biological role, large subunit of the glutamine-dependent carbamoyl phosphate synthetase (CPSase). CPSase catalyzes the formation of carbamoyl phosphate from the ammonia moiety of glutamine, carbonate, and phosphate donated by ATP, constituting the first step of 2 biosynthetic pathways, one leading to arginine and/or urea and the other to pyrimidine nucleotides. The large subunit (synthetase) binds the substrates ammonia (free or transferred from glutamine from the small subunit), hydrogencarbonate and ATP and carries out an ATP-coupled ligase reaction, activating hydrogencarbonate by forming carboxy phosphate which reacts with ammonia to form carbamoyl phosphate. The polypeptide is Carbamoyl phosphate synthase large chain (Lactobacillus acidophilus (strain ATCC 700396 / NCK56 / N2 / NCFM)).